Consider the following 228-residue polypeptide: FtsZ-localized protein A (228 aa).

The GST N-terminal domain occupies 3–85; the sequence is VERTLHHFPL…HIEETETEPP (83 aa). The GST C-terminal domain occupies 90 to 223; sequence DPAERAEARR…WPGLAPAAHY (134 aa).

It belongs to the GST superfamily. As to quaternary structure, homodimer. Interacts with FtsZ filaments. Probably interacts with the GTPase domain of FtsZ.

Its subcellular location is the cytoplasm. Functionally, essential cell division protein that must bind to FtsZ for division to occur. Critical coordinator of envelope constriction through its interaction with FtsZ. Promotes the formation of highly curved FtsZ filaments, reduces the GTPase activity of FtsZ and stabilizes FtsZ polymers. May regulate FtsZ function by modulating its superstructure. Does not bind to glutathione. The polypeptide is FtsZ-localized protein A (Caulobacter vibrioides (strain NA1000 / CB15N) (Caulobacter crescentus)).